The following is a 183-amino-acid chain: Large ribosomal subunit protein uL6 (183 aa).

Belongs to the universal ribosomal protein uL6 family. In terms of assembly, part of the 50S ribosomal subunit.

Functionally, this protein binds to the 23S rRNA, and is important in its secondary structure. It is located near the subunit interface in the base of the L7/L12 stalk, and near the tRNA binding site of the peptidyltransferase center. In Malacoplasma penetrans (strain HF-2) (Mycoplasma penetrans), this protein is Large ribosomal subunit protein uL6.